We begin with the raw amino-acid sequence, 316 residues long: Glutathione synthetase (316 aa).

The region spanning Lys125–Glu310 is the ATP-grasp domain. Residue Arg256 is glycosylated (N-beta-linked (GlcNAc) arginine). Glu281 and Asn283 together coordinate Mg(2+).

This sequence belongs to the prokaryotic GSH synthase family. The cofactor is Mg(2+). Mn(2+) serves as cofactor.

It carries out the reaction gamma-L-glutamyl-L-cysteine + glycine + ATP = glutathione + ADP + phosphate + H(+). The protein operates within sulfur metabolism; glutathione biosynthesis; glutathione from L-cysteine and L-glutamate: step 2/2. The chain is Glutathione synthetase from Escherichia coli O127:H6 (strain E2348/69 / EPEC).